We begin with the raw amino-acid sequence, 174 residues long: Alkyl hydroperoxide reductase AhpD (174 aa).

The Proton donor role is filled by Cys-130. Cys-130 and Cys-133 form a disulfide bridge. The active-site Cysteine sulfenic acid (-SOH) intermediate is Cys-133.

Belongs to the AhpD family. In terms of assembly, homotrimer.

The enzyme catalyses N(6)-[(R)-dihydrolipoyl]-L-lysyl-[lipoyl-carrier protein] + a hydroperoxide = N(6)-[(R)-lipoyl]-L-lysyl-[lipoyl-carrier protein] + an alcohol + H2O. In terms of biological role, antioxidant protein with alkyl hydroperoxidase activity. Required for the reduction of the AhpC active site cysteine residues and for the regeneration of the AhpC enzyme activity. The protein is Alkyl hydroperoxide reductase AhpD of Corynebacterium kroppenstedtii (strain DSM 44385 / JCM 11950 / CIP 105744 / CCUG 35717).